The following is a 169-amino-acid chain: Peptide deformylase (169 aa).

Fe cation contacts are provided by Cys91 and His133. Glu134 is a catalytic residue. Residue His137 participates in Fe cation binding.

It belongs to the polypeptide deformylase family. Requires Fe(2+) as cofactor.

It carries out the reaction N-terminal N-formyl-L-methionyl-[peptide] + H2O = N-terminal L-methionyl-[peptide] + formate. Functionally, removes the formyl group from the N-terminal Met of newly synthesized proteins. Requires at least a dipeptide for an efficient rate of reaction. N-terminal L-methionine is a prerequisite for activity but the enzyme has broad specificity at other positions. In Enterobacter sp. (strain 638), this protein is Peptide deformylase.